Here is a 171-residue protein sequence, read N- to C-terminus: Large ribosomal subunit protein uL10 (171 aa).

This sequence belongs to the universal ribosomal protein uL10 family. In terms of assembly, part of the ribosomal stalk of the 50S ribosomal subunit. The N-terminus interacts with L11 and the large rRNA to form the base of the stalk. The C-terminus forms an elongated spine to which L12 dimers bind in a sequential fashion forming a multimeric L10(L12)X complex.

In terms of biological role, forms part of the ribosomal stalk, playing a central role in the interaction of the ribosome with GTP-bound translation factors. The sequence is that of Large ribosomal subunit protein uL10 (rplJ) from Lactococcus lactis subsp. lactis (strain IL1403) (Streptococcus lactis).